A 231-amino-acid polypeptide reads, in one-letter code: Ion-translocating oxidoreductase complex subunit E (231 aa).

The next 6 helical transmembrane spans lie at 18–38 (ALVQ…ATNA), 39–59 (LGLG…ISTL), 63–83 (TPAE…VSAV), 86–106 (LINA…PLIV), 125–145 (ALSA…MFVL), and 182–202 (PFLL…MLAG).

The protein belongs to the NqrDE/RnfAE family. In terms of assembly, the complex is composed of six subunits: RsxA, RsxB, RsxC, RsxD, RsxE and RsxG.

The protein localises to the cell inner membrane. In terms of biological role, part of a membrane-bound complex that couples electron transfer with translocation of ions across the membrane. Required to maintain the reduced state of SoxR. This is Ion-translocating oxidoreductase complex subunit E from Escherichia coli (strain SE11).